The sequence spans 190 residues: TATA box-binding protein-like 1 (190 aa).

The protein belongs to the TBP family. In terms of assembly, binds TFIIA and TFIIB.

It is found in the cytoplasm. Its subcellular location is the nucleus. Functionally, part of a specialized transcription system that mediates the transcription of most ribosomal proteins through the 5'-TCT-3' motif which is a core promoter element at these genes. Seems to also mediate the transcription of NF1. Does not bind the TATA box. This Pongo abelii (Sumatran orangutan) protein is TATA box-binding protein-like 1 (TBPL1).